We begin with the raw amino-acid sequence, 393 residues long: Cell division protein FtsZ 2 (393 aa).

Residues 1 to 28 form a disordered region; sequence MQDIVQDALDNAEAEQREMDGDGDGDEF. GTP-binding positions include 40 to 44, 127 to 129, glutamate 158, arginine 161, and aspartate 204; these read GAGNN and GTG. The interval 339 to 393 is disordered; the sequence is GPSTQKQADKSRRELQDVDSKQRAADDAGAGGFGGAHSDGGQDEVEQENGLDVIR. Positions 345–364 are enriched in basic and acidic residues; sequence QADKSRRELQDVDSKQRAAD. Gly residues predominate over residues 367-376; the sequence is GAGGFGGAHS.

The protein belongs to the FtsZ family. Homodimer. Polymerizes to form a dynamic ring structure in a strictly GTP-dependent manner. Interacts directly with several other division proteins.

Its subcellular location is the cytoplasm. In terms of biological role, essential cell division protein that forms a contractile ring structure (Z ring) at the future cell division site. The regulation of the ring assembly controls the timing and the location of cell division. One of the functions of the FtsZ ring is to recruit other cell division proteins to the septum to produce a new cell wall between the dividing cells. Binds GTP and shows GTPase activity. Overexpression causes significant changes in cell morphology. In Halobacterium salinarum (strain ATCC 29341 / DSM 671 / R1), this protein is Cell division protein FtsZ 2.